The chain runs to 342 residues: Ribosomal RNA small subunit methyltransferase C (342 aa).

The protein belongs to the methyltransferase superfamily. RsmC family. Monomer.

It is found in the cytoplasm. It carries out the reaction guanosine(1207) in 16S rRNA + S-adenosyl-L-methionine = N(2)-methylguanosine(1207) in 16S rRNA + S-adenosyl-L-homocysteine + H(+). Its function is as follows. Specifically methylates the guanine in position 1207 of 16S rRNA in the 30S particle. This Salmonella agona (strain SL483) protein is Ribosomal RNA small subunit methyltransferase C.